A 537-amino-acid chain; its full sequence is Putative cysteine ligase BshC (537 aa).

A coiled-coil region spans residues 417 to 457 (ASEQFLNELDQLEAQQKETYERLAAEVQGNEDNKNLVEKNN).

Belongs to the BshC family.

Involved in bacillithiol (BSH) biosynthesis. May catalyze the last step of the pathway, the addition of cysteine to glucosamine malate (GlcN-Mal) to generate BSH. The sequence is that of Putative cysteine ligase BshC from Staphylococcus carnosus (strain TM300).